Reading from the N-terminus, the 112-residue chain is Histone H2B (112 aa).

Residues 1–24 (MATPKSSSANRKKGGKKSHRKPKR) form a disordered region. Over residues 10 to 24 (NRKKGGKKSHRKPKR) the composition is skewed to basic residues.

The protein belongs to the histone H2B family. In terms of assembly, the nucleosome is a histone octamer containing two molecules each of H2A, H2B, H3 and H4 assembled in one H3-H4 heterotetramer and two H2A-H2B heterodimers. The octamer wraps approximately 147 bp of DNA.

It is found in the nucleus. The protein localises to the chromosome. Core component of nucleosome. Nucleosomes wrap and compact DNA into chromatin, limiting DNA accessibility to the cellular machineries which require DNA as a template. Histones thereby play a central role in transcription regulation, DNA repair, DNA replication and chromosomal stability. DNA accessibility is regulated via a complex set of post-translational modifications of histones, also called histone code, and nucleosome remodeling. The sequence is that of Histone H2B from Trypanosoma cruzi.